The primary structure comprises 455 residues: tRNA modification GTPase MnmE (455 aa).

(6S)-5-formyl-5,6,7,8-tetrahydrofolate contacts are provided by Arg-24, Glu-81, and Lys-120. One can recognise a TrmE-type G domain in the interval 216–378; it reads GMTVVIAGRP…LREHLKHCMG (163 aa). Asn-226 is a K(+) binding site. GTP contacts are provided by residues 226–231, 245–251, 270–273, and 335–338; these read NAGKSS, TDIAGTT, DTAG, and NKAD. Ser-230 is a binding site for Mg(2+). K(+) contacts are provided by Thr-245, Ile-247, and Thr-250. Position 251 (Thr-251) interacts with Mg(2+). Lys-455 is a (6S)-5-formyl-5,6,7,8-tetrahydrofolate binding site.

The protein belongs to the TRAFAC class TrmE-Era-EngA-EngB-Septin-like GTPase superfamily. TrmE GTPase family. Homodimer. Heterotetramer of two MnmE and two MnmG subunits. The cofactor is K(+).

It is found in the cytoplasm. Functionally, exhibits a very high intrinsic GTPase hydrolysis rate. Involved in the addition of a carboxymethylaminomethyl (cmnm) group at the wobble position (U34) of certain tRNAs, forming tRNA-cmnm(5)s(2)U34. The sequence is that of tRNA modification GTPase MnmE from Stutzerimonas stutzeri (strain A1501) (Pseudomonas stutzeri).